The primary structure comprises 488 residues: Histone deacetylase 2 (488 aa).

The tract at residues 9–322 (KKKVCYYYDG…WTYETAVALD (314 aa)) is histone deacetylase. 1D-myo-inositol 1,4,5,6-tetrakisphosphate contacts are provided by glycine 28 and lysine 32. Residue lysine 75 is modified to N6-acetyllysine; alternate. Lysine 75 is covalently cross-linked (Glycyl lysine isopeptide (Lys-Gly) (interchain with G-Cter in SUMO2); alternate). Histidine 142 is an active-site residue. 8 residues coordinate Ca(2+): aspartate 175, aspartate 177, histidine 179, phenylalanine 188, threonine 191, valine 194, serine 198, and phenylalanine 199. Residues aspartate 177 and histidine 179 each contribute to the Zn(2+) site. Lysine 221 carries the N6-acetyllysine modification. Residue tyrosine 223 participates in Ca(2+) binding. The residue at position 262 (cysteine 262) is an S-nitrosocysteine. Aspartate 265 provides a ligand contact to Zn(2+). Residue arginine 271 participates in 1D-myo-inositol 1,4,5,6-tetrakisphosphate binding. Cysteine 274 is modified (S-nitrosocysteine). The disordered stretch occupies residues 389 to 488 (AVHEDSGDED…GTKSEQLSNP (100 aa)). Phosphoserine is present on residues serine 394, serine 407, serine 422, and serine 424. The span at 402-417 (PDKRISIRASDKRIAC) shows a compositional bias: basic and acidic residues. Residues 418-428 (DEEFSDSEDEG) are compositionally biased toward acidic residues. The span at 429–481 (EGGRRNVADHKKGAKKARIEEDKKETEDKKTDVKEEDKSKDNSGEKTDTKGTK) shows a compositional bias: basic and acidic residues. Residues lysine 439, lysine 452, lysine 458, lysine 462, lysine 478, and lysine 481 each participate in a glycyl lysine isopeptide (Lys-Gly) (interchain with G-Cter in SUMO2) cross-link.

The protein belongs to the histone deacetylase family. HD type 1 subfamily. As to quaternary structure, part of the core histone deacetylase (HDAC) complex composed of HDAC1, HDAC2, RBBP4 and RBBP7, the core complex associates with SIN3, SAP18 and SAP30 to form the SIN3 HDAC complex. Component of the nucleosome remodeling and deacetylase (NuRD) repressor complex, composed of core proteins MTA1, MTA2, MTA3, RBBP4, RBBP7, HDAC1, HDAC2, MBD2, MBD3, and peripherally associated proteins CDK2AP1, CDK2AP2, GATAD2A, GATAD2B, CHD3, CHD4 and CHD5. The exact stoichiometry of the NuRD complex is unknown, and some subunits such as MBD2 and MBD3, GATAD2A and GATAD2B, and CHD3, CHD4 and CHD5 define mutually exclusive NuRD complexes. Component of a RCOR/GFI/KDM1A/HDAC complex. Component of a BHC histone deacetylase complex that contains HDAC1, HDAC2, HMG20B, KDM1A, RCOR1 and PHF21A. The BHC complex may also contain ZMYM2, ZNF217, ZMYM3, GSE1 and GTF2I. Part of a complex containing the core histones H2A, H2B, H3 and H4, DEK and unphosphorylated DAXX. Part of a complex containing ATR and CHD4. Forms a heterologous complex at least with YY1. Interacts in the late S-phase of DNA-replication with DNMT1 in the other transcriptional repressor complex composed of DNMT1, DMAP1, PCNA, CAF1. Component of a mSin3A corepressor complex that contains SIN3A, SAP130, SUDS3, ARID4B, HDAC1 and HDAC2. Part of a complex composed of TRIM28, HDAC1, HDAC2 and EHMT2. Part of a complex containing at least CDYL, MIER1, MIER2, HDAC1 and HDAC2. Component of a histone deacetylase complex containing DNTTIP1, ZNF541, HDAC1 and HDAC2. Forms a complex comprising APPL1, RUVBL2, APPL2, CTNNB1 and HDAC1. Interacts directly with GFI1. Interacts directly with GFI1B. Interacts with APEX1; the interaction is not dependent on the acetylated status of APEX1. Interacts with ATR. Interacts with BCL6 (non-acetylated form). Interacts with BEND3. Interacts with CBFA2T3. Interacts with CDK2AP1. Interacts with CHD4. Interacts with CHD5. Interacts with CHFR. Interacts with CRY1. Interacts with DNMT1. Interacts with GATAD2A. Interacts with HCFC1. Interacts with HDAC7. Interacts with HDAC10. Interacts with INSM1. Interacts with KDM4A. Interacts with MACROH2A1 (via the non-histone region). Interacts with MBD3L2. Interacts with MTA1, with a preference for sumoylated MTA1. Interacts with NACC2. Interacts with NRIP1. Interacts with PELP1. Interacts with PIMREG. Interacts with PRDM6. Interacts with PWWP2B. Interacts with SAP30. Interacts with SAP30L. Interacts with SETDB1. Interacts with SIX3. Interacts with SMARCAD1. Interacts with SNW1. Interacts with SPHK2. Interacts with SPEN/MINT. Interacts (CK2 phosphorylated form) with SP3. Interacts with SUV39H1. Interacts with TSHZ3 (via its N-terminus). Interacts with ZMYND8. Interacts with ZNF431. Interacts with ZNF263; recruited to the SIX3 promoter along with other proteins involved in chromatin modification and transcriptional corepression where it contributes to transcriptional repression. Identified in a complex with HDAC1, KCTD19, DNTTIP1 and ZNF541. Component of the SIN3B complex, which includes SIN3B, HDAC2, PHF12 and MORF4L1; interacts directly with all subunits. Zn(2+) is required as a cofactor. Ca(2+) serves as cofactor. S-nitrosylated by GAPDH. In neurons, S-nitrosylation at Cys-262 and Cys-274 does not affect enzyme activity, but induces HDAC2 release from chromatin. This in turn increases acetylation of histones surrounding neurotrophin-dependent gene promoters and promotes their transcription. In embryonic cortical neurons, S-Nitrosylation regulates dendritic growth and branching. As to expression, widely expressed; lower levels in brain and lung.

Its subcellular location is the nucleus. The protein localises to the cytoplasm. It carries out the reaction N(6)-acetyl-L-lysyl-[histone] + H2O = L-lysyl-[histone] + acetate. It catalyses the reaction N(6)-acetyl-L-lysyl-[protein] + H2O = L-lysyl-[protein] + acetate. The enzyme catalyses N(6)-(2E)-butenoyl-L-lysyl-[protein] + H2O = (2E)-2-butenoate + L-lysyl-[protein]. The catalysed reaction is N(6)-(2-hydroxyisobutanoyl)-L-lysyl-[protein] + H2O = 2-hydroxy-2-methylpropanoate + L-lysyl-[protein]. It carries out the reaction N(6)-[(S)-lactoyl]-L-lysyl-[protein] + H2O = (S)-lactate + L-lysyl-[protein]. Inositol tetraphosphate (1D-myo-inositol 1,4,5,6-tetrakisphosphate) may act as an intermolecular glue between HDAC2 and N-Cor repressor complex components. Its function is as follows. Histone deacetylase that catalyzes the deacetylation of lysine residues on the N-terminal part of the core histones (H2A, H2B, H3 and H4). Histone deacetylation gives a tag for epigenetic repression and plays an important role in transcriptional regulation, cell cycle progression and developmental events. Histone deacetylases act via the formation of large multiprotein complexes. Forms transcriptional repressor complexes by associating with MAD, SIN3, YY1 and N-COR. Component of a RCOR/GFI/KDM1A/HDAC complex that suppresses, via histone deacetylase (HDAC) recruitment, a number of genes implicated in multilineage blood cell development. Acts as a component of the histone deacetylase NuRD complex which participates in the remodeling of chromatin. Component of the SIN3B complex that represses transcription and counteracts the histone acetyltransferase activity of EP300 through the recognition H3K27ac marks by PHF12 and the activity of the histone deacetylase HDAC2. Also deacetylates non-histone targets: deacetylates TSHZ3, thereby regulating its transcriptional repressor activity. May be involved in the transcriptional repression of circadian target genes, such as PER1, mediated by CRY1 through histone deacetylation. Involved in MTA1-mediated transcriptional corepression of TFF1 and CDKN1A. In addition to protein deacetylase activity, also acts as a protein-lysine deacylase by recognizing other acyl groups: catalyzes removal of (2E)-butenoyl (crotonyl), lactoyl (lactyl) and 2-hydroxyisobutanoyl (2-hydroxyisobutyryl) acyl groups from lysine residues, leading to protein decrotonylation, delactylation and de-2-hydroxyisobutyrylation, respectively. The chain is Histone deacetylase 2 from Homo sapiens (Human).